The primary structure comprises 552 residues: MAGUK p55 subfamily member 2 (552 aa).

2 consecutive L27 domains span residues 8–59 and 60–118; these read SESA…EETK and LEAV…YETP. Ser42 is modified (phosphoserine). The residue at position 117 (Thr117) is a Phosphothreonine. At Ser121 the chain carries Phosphoserine. The 80-residue stretch at 140–219 folds into the PDZ domain; it reads MVGIRKTAGE…SVILKILPSY (80 aa). Residues 225–293 enclose the SH3 domain; sequence PRQVFVKCHF…PSQLLEEKRK (69 aa). The Guanylate kinase-like domain maps to 350–537; the sequence is RKTLVLIGAQ…TFRELQTAME (188 aa).

The protein belongs to the MAGUK family. Can homomultimerise. Interacts with CACNG2. Interacts (via the SH3-Guanylate kinase-like sub-module) with DLG4/PSD95 and DLGAP1/GKAP. Interacts (via the PDZ domain) with CADM1 (via C-terminus). Interacts with KCNN2/SK2 (via N-terminal domain). Interacts with SRC. Phosphorylated by SRC. As to expression, expressed in hippocampal neurons.

The protein resides in the cell projection. It is found in the dendrite. Its subcellular location is the postsynaptic density. The protein localises to the cytoplasm. It localises to the cytoskeleton. The protein resides in the membrane. In terms of biological role, postsynaptic MAGUK scaffold protein that links CADM1 cell adhesion molecules to core components of the postsynaptic density. In CA1 pyramidal neurons, required for synaptic KCNN2-containing channel function and long-term potentiation expression. Seems to negatively regulate SRC function in epithelial cells. The polypeptide is MAGUK p55 subfamily member 2 (Rattus norvegicus (Rat)).